The following is a 199-amino-acid chain: MYQDQDFQVFEDQTLAGRLGKIQKQIDPKFLITAGDLEPVLAELSVPIYQHVSQHRRRTKNPPTDTWIAFSTSKRGYKMLPHLEIGFWDDRFFIWLAVLQEAKNRQGLLGQVQLADVLNLPSTFECGNDHADKNCGRPLTLTNYQALMREQVNRHAEWQLGRNFMRGSDLFTTTPDDQAAIIRDTVAALLPIYRQLIAD.

Belongs to the UPF0637 family.

The sequence is that of UPF0637 protein LVIS_1261 from Levilactobacillus brevis (strain ATCC 367 / BCRC 12310 / CIP 105137 / JCM 1170 / LMG 11437 / NCIMB 947 / NCTC 947) (Lactobacillus brevis).